Here is a 130-residue protein sequence, read N- to C-terminus: Histone H2A type 3 (130 aa).

A disordered region spans residues 1–22 (MSGRGKQGGKARAKAKSRSSRA). Residue Ser-2 is modified to N-acetylserine. At Ser-2 the chain carries Phosphoserine; by RPS6KA5. The residue at position 4 (Arg-4) is a Citrulline; alternate. Position 4 is a symmetric dimethylarginine; by PRMT5; alternate (Arg-4). Lys-6 bears the N6-(2-hydroxyisobutyryl)lysine mark. The segment covering 7 to 19 (QGGKARAKAKSRS) has biased composition (basic residues). The residue at position 10 (Lys-10) is an N6-(2-hydroxyisobutyryl)lysine; alternate. Residues Lys-10 and Lys-14 each carry the N6-(beta-hydroxybutyryl)lysine; alternate modification. Lys-10 is modified (N6-lactoyllysine; alternate). Lys-10 carries the post-translational modification N6-succinyllysine; alternate. A Glycyl lysine isopeptide (Lys-Gly) (interchain with G-Cter in ubiquitin); alternate cross-link involves residue Lys-14. A Glycyl lysine isopeptide (Lys-Gly) (interchain with G-Cter in ubiquitin) cross-link involves residue Lys-16. Lys-37 is subject to N6-(2-hydroxyisobutyryl)lysine; alternate. Lys-37 carries the N6-(beta-hydroxybutyryl)lysine; alternate modification. The residue at position 37 (Lys-37) is an N6-crotonyllysine; alternate. Residues Lys-75 and Lys-76 each carry the N6-(2-hydroxyisobutyryl)lysine modification. Residue Lys-96 is modified to N6-(2-hydroxyisobutyryl)lysine; alternate. The residue at position 96 (Lys-96) is an N6-(beta-hydroxybutyryl)lysine; alternate. Lys-96 carries the N6-succinyllysine; alternate modification. The residue at position 96 (Lys-96) is an N6-glutaryllysine; alternate. Residue Gln-105 is modified to N5-methylglutamine. The residue at position 119 (Lys-119) is an N6-(2-hydroxyisobutyryl)lysine; alternate. At Lys-119 the chain carries N6-(beta-hydroxybutyryl)lysine; alternate. Lys-119 and Lys-120 each carry N6-crotonyllysine; alternate. Lys-119 and Lys-120 each carry N6-glutaryllysine; alternate. A Glycyl lysine isopeptide (Lys-Gly) (interchain with G-Cter in ubiquitin); alternate cross-link involves residue Lys-120. A Phosphothreonine; by DCAF1 modification is found at Thr-121. At Lys-126 the chain carries N6-crotonyllysine; alternate. Position 126 is an N6-glutaryllysine; alternate (Lys-126).

The protein belongs to the histone H2A family. As to quaternary structure, the nucleosome is a histone octamer containing two molecules each of H2A, H2B, H3 and H4 assembled in one H3-H4 heterotetramer and two H2A-H2B heterodimers. The octamer wraps approximately 147 bp of DNA. Deiminated on Arg-4 in granulocytes upon calcium entry. In terms of processing, monoubiquitination of Lys-120 (H2AK119Ub) by RING1, TRIM37 and RNF2/RING2 complex gives a specific tag for epigenetic transcriptional repression and participates in X chromosome inactivation of female mammals. It is involved in the initiation of both imprinted and random X inactivation. Ubiquitinated H2A is enriched in inactive X chromosome chromatin. Ubiquitination of H2A functions downstream of methylation of 'Lys-27' of histone H3 (H3K27me). H2AK119Ub by RNF2/RING2 can also be induced by ultraviolet and may be involved in DNA repair. Monoubiquitination of Lys-120 (H2AK119Ub) by TRIM37 may promote transformation of cells in a number of breast cancers. Following DNA double-strand breaks (DSBs), it is ubiquitinated through 'Lys-63' linkage of ubiquitin moieties by the E2 ligase UBE2N and the E3 ligases RNF8 and RNF168, leading to the recruitment of repair proteins to sites of DNA damage. Ubiquitination at Lys-14 and Lys-16 (H2AK13Ub and H2AK15Ub, respectively) in response to DNA damage is initiated by RNF168 that mediates monoubiquitination at these 2 sites, and 'Lys-63'-linked ubiquitin are then conjugated to monoubiquitin; RNF8 is able to extend 'Lys-63'-linked ubiquitin chains in vitro. Deubiquitinated by USP51 at Lys-14 and Lys-16 (H2AK13Ub and H2AK15Ub, respectively) after damaged DNA is repaired. H2AK119Ub and ionizing radiation-induced 'Lys-63'-linked ubiquitination (H2AK13Ub and H2AK15Ub) are distinct events. Post-translationally, phosphorylation on Ser-2 (H2AS1ph) is enhanced during mitosis. Phosphorylation on Ser-2 by RPS6KA5/MSK1 directly represses transcription. Acetylation of H3 inhibits Ser-2 phosphorylation by RPS6KA5/MSK1. Phosphorylation at Thr-121 (H2AT120ph) by DCAF1 is present in the regulatory region of many tumor suppresor genes and down-regulates their transcription. Glutamine methylation at Gln-105 (H2AQ104me) by FBL is specifically dedicated to polymerase I. It is present at 35S ribosomal DNA locus and impairs binding of the FACT complex. In terms of processing, symmetric dimethylation on Arg-4 by the PRDM1/PRMT5 complex may play a crucial role in the germ-cell lineage. Post-translationally, crotonylation (Kcr) is specifically present in male germ cells and marks testis-specific genes in post-meiotic cells, including X-linked genes that escape sex chromosome inactivation in haploid cells. Crotonylation marks active promoters and enhancers and confers resistance to transcriptional repressors. It is also associated with post-meiotically activated genes on autosomes. Lactylated in macrophages by EP300/P300 by using lactoyl-CoA directly derived from endogenous or exogenous lactate, leading to stimulates gene transcription.

Its subcellular location is the nucleus. It localises to the chromosome. Its function is as follows. Core component of nucleosome. Nucleosomes wrap and compact DNA into chromatin, limiting DNA accessibility to the cellular machineries which require DNA as a template. Histones thereby play a central role in transcription regulation, DNA repair, DNA replication and chromosomal stability. DNA accessibility is regulated via a complex set of post-translational modifications of histones, also called histone code, and nucleosome remodeling. The chain is Histone H2A type 3 from Homo sapiens (Human).